A 34-amino-acid chain; its full sequence is MSDINATRLPAWLTDCPCVGDDVNRLLTRGESLC.

Positions 1–10 are excised as a propeptide; sequence MSDINATRLP. A cross-link (cyclopeptide (Ala-Pro)) is located at residues 11 to 17; sequence AWLTDCP. A propeptide spanning residues 18–34 is cleaved from the precursor; sequence CVGDDVNRLLTRGESLC.

The protein belongs to the MSDIN fungal toxin family. In terms of processing, processed by the macrocyclase-peptidase enzyme POPB to yield a toxic cyclic heptapeptide. POPB first removes 10 residues from the N-terminus. Conformational trapping of the remaining peptide forces the enzyme to release this intermediate rather than proceed to macrocyclization. The enzyme rebinds the remaining peptide in a different conformation and catalyzes macrocyclization of the N-terminal 7 residues. Expressed in basidiocarps.

In terms of biological role, probable toxin that belongs to the MSDIN-like toxin family responsible for a large number of food poisoning cases and deaths. The sequence is that of MSDIN-like toxin proprotein 7 from Amanita exitialis (Guangzhou destroying angel).